We begin with the raw amino-acid sequence, 334 residues long: tRNA U34 carboxymethyltransferase (334 aa).

Residues Lys-91, Trp-105, Lys-110, Gly-130, 152–154 (DPT), 181–182 (IE), Met-196, Tyr-200, and Arg-315 contribute to the carboxy-S-adenosyl-L-methionine site.

It belongs to the class I-like SAM-binding methyltransferase superfamily. CmoB family. Homotetramer.

It catalyses the reaction carboxy-S-adenosyl-L-methionine + 5-hydroxyuridine(34) in tRNA = 5-carboxymethoxyuridine(34) in tRNA + S-adenosyl-L-homocysteine + H(+). Catalyzes carboxymethyl transfer from carboxy-S-adenosyl-L-methionine (Cx-SAM) to 5-hydroxyuridine (ho5U) to form 5-carboxymethoxyuridine (cmo5U) at position 34 in tRNAs. The chain is tRNA U34 carboxymethyltransferase from Klebsiella pneumoniae (strain 342).